A 606-amino-acid chain; its full sequence is Protein couch potato (606 aa).

A Nuclear localization signal motif is present at residues 81 to 105 (IKRRPTLPQTPASAPQVLSPSPKRQ). A run of 7 repeats spans residues 91 to 95 (PASAP), 109 to 113 (AVSVL), 114 to 118 (PVTVP), 122 to 126 (PVSVP), 128 to 132 (PVSVP), 134 to 138 (PVSVK), and 159 to 163 (PISHP). The tract at residues 91-164 (PASAPQVLSP…SHSHPISHPH (74 aa)) is 7 X 5 AA approximate repeats of P-V-S-V-P. 4 disordered regions span residues 147 to 166 (QIAH…PHHH), 282 to 311 (QQQQ…AGAA), 324 to 365 (VPTT…TSAA), and 388 to 410 (PATS…NSNS). A compositionally biased stretch (low complexity) spans 344 to 365 (SNSATASAPTTPSPAGSVTSAA). Positions 442 to 524 (RTLFVSGLPM…QTIRLEFAKS (83 aa)) constitute an RRM domain.

Expressed in neural precursors and their daughter cells in the embryonic peripheral nervous system. Less abundant in a number of glial cells in the peripheral and central nervous systems and also present at low levels in the developing gut.

It is found in the nucleus. Its function is as follows. May play a role in the development or function of the peripheral nervous system by regulating the processing of nervous system-specific transcripts. This chain is Protein couch potato (cpo), found in Drosophila melanogaster (Fruit fly).